The chain runs to 144 residues: Protein cornichon (144 aa).

At 1–10 (MAFNFTAFTY) the chain is on the lumenal side. The interaction with grk stretch occupies residues 1 to 57 (MAFNFTAFTYIVALIGDAFLIFFAIFHVIAFDELKTDYKNPIDQCNSLNPLVLPEYL). A helical membrane pass occupies residues 11 to 31 (IVALIGDAFLIFFAIFHVIAF). Over 32–56 (DELKTDYKNPIDQCNSLNPLVLPEY) the chain is Cytoplasmic. A helical transmembrane segment spans residues 57 to 77 (LLHLFLNLLFLFCGEWYSLCL). Topologically, residues 78–122 (NIPLIAYHIWRYKNRPLMSGPGLYDPTTVLKTDTLSRNLREGWIK) are lumenal. Residues 123–143 (LAVYLISFFYYIYGMVYSLIS) traverse the membrane as a helical segment. A topological domain (cytoplasmic) is located at residue Thr-144.

This sequence belongs to the cornichon family. Interacts with grk.

The protein resides in the endoplasmic reticulum membrane. In terms of biological role, acts as a cargo receptor necessary for the transportation of gurken (grk) to a transitional endoplasmic reticulum (tER) site and promotes its incorporation into coat protein complex II (COPII) vesicles. Associated with gurken, produces a signal received by torpedo resulting in a signaling pathway that first establishes posterior follicle cell fates and normal localization of the anterior and posterior determinants, later they act in a signaling event inducing dorsal follicle cell fates and regulating the dorsal-ventral pattern of egg and embryo. This chain is Protein cornichon (cni), found in Drosophila virilis (Fruit fly).